A 478-amino-acid polypeptide reads, in one-letter code: 2-succinylbenzoate--CoA ligase (478 aa).

The protein belongs to the ATP-dependent AMP-binding enzyme family. MenE subfamily.

The catalysed reaction is 2-succinylbenzoate + ATP + CoA = 2-succinylbenzoyl-CoA + AMP + diphosphate. It functions in the pathway quinol/quinone metabolism; 1,4-dihydroxy-2-naphthoate biosynthesis; 1,4-dihydroxy-2-naphthoate from chorismate: step 5/7. Its pathway is quinol/quinone metabolism; menaquinone biosynthesis. In terms of biological role, converts 2-succinylbenzoate (OSB) to 2-succinylbenzoyl-CoA (OSB-CoA). This Bacillus licheniformis (strain ATCC 14580 / DSM 13 / JCM 2505 / CCUG 7422 / NBRC 12200 / NCIMB 9375 / NCTC 10341 / NRRL NRS-1264 / Gibson 46) protein is 2-succinylbenzoate--CoA ligase.